Reading from the N-terminus, the 488-residue chain is UDP-glycosyltransferase 73B1 (488 aa).

UDP-alpha-D-glucose contacts are provided by residues Thr-297, 356–358, 373–381, and 395–398; these read APQ, HCGWNSLLE, and GAEQ.

This sequence belongs to the UDP-glycosyltransferase family.

Functionally, possesses low quercetin 3-O-glucosyltransferase and 7-O-glucosyltransferase activities in vitro. This is UDP-glycosyltransferase 73B1 (UGT73B1) from Arabidopsis thaliana (Mouse-ear cress).